Here is a 276-residue protein sequence, read N- to C-terminus: Large ribosomal subunit protein uL2 (276 aa).

Residues 223-276 form a disordered region; sequence GVAMNPVDHPHGGGEGRGKGHHPTSPWGLPTKGYKTRRGKRPSDKFIVRRRNEV. Composition is skewed to basic and acidic residues over residues 230-240 and 263-276; these read DHPHGGGEGRG and RPSD…RNEV.

The protein belongs to the universal ribosomal protein uL2 family. In terms of assembly, part of the 50S ribosomal subunit. Forms a bridge to the 30S subunit in the 70S ribosome.

Its function is as follows. One of the primary rRNA binding proteins. Required for association of the 30S and 50S subunits to form the 70S ribosome, for tRNA binding and peptide bond formation. It has been suggested to have peptidyltransferase activity; this is somewhat controversial. Makes several contacts with the 16S rRNA in the 70S ribosome. The polypeptide is Large ribosomal subunit protein uL2 (Thermotoga maritima (strain ATCC 43589 / DSM 3109 / JCM 10099 / NBRC 100826 / MSB8)).